Reading from the N-terminus, the 308-residue chain is Ornithine carbamoyltransferase (308 aa).

Residues 56–59 (STRT), glutamine 83, arginine 107, and 134–137 (HPCQ) each bind carbamoyl phosphate. L-ornithine-binding positions include asparagine 165, aspartate 225, and 229 to 230 (SM). Carbamoyl phosphate is bound by residues 266–267 (CL) and arginine 294.

This sequence belongs to the aspartate/ornithine carbamoyltransferase superfamily. OTCase family.

The protein resides in the cytoplasm. It catalyses the reaction carbamoyl phosphate + L-ornithine = L-citrulline + phosphate + H(+). The protein operates within amino-acid biosynthesis; L-arginine biosynthesis; L-arginine from L-ornithine and carbamoyl phosphate: step 1/3. Its function is as follows. Reversibly catalyzes the transfer of the carbamoyl group from carbamoyl phosphate (CP) to the N(epsilon) atom of ornithine (ORN) to produce L-citrulline. This is Ornithine carbamoyltransferase from Ruegeria pomeroyi (strain ATCC 700808 / DSM 15171 / DSS-3) (Silicibacter pomeroyi).